Reading from the N-terminus, the 239-residue chain is 1-(5-phosphoribosyl)-5-[(5-phosphoribosylamino)methylideneamino] imidazole-4-carboxamide isomerase (239 aa).

D8 (proton acceptor) is an active-site residue. The Proton donor role is filled by D129.

Belongs to the HisA/HisF family.

It is found in the cytoplasm. The enzyme catalyses 1-(5-phospho-beta-D-ribosyl)-5-[(5-phospho-beta-D-ribosylamino)methylideneamino]imidazole-4-carboxamide = 5-[(5-phospho-1-deoxy-D-ribulos-1-ylimino)methylamino]-1-(5-phospho-beta-D-ribosyl)imidazole-4-carboxamide. The protein operates within amino-acid biosynthesis; L-histidine biosynthesis; L-histidine from 5-phospho-alpha-D-ribose 1-diphosphate: step 4/9. This Cereibacter sphaeroides (strain ATCC 17025 / ATH 2.4.3) (Rhodobacter sphaeroides) protein is 1-(5-phosphoribosyl)-5-[(5-phosphoribosylamino)methylideneamino] imidazole-4-carboxamide isomerase.